Here is a 622-residue protein sequence, read N- to C-terminus: Threonine--tRNA ligase (622 aa).

Positions 1–141 (MKTLLIHSDY…SRKITTERKE (141 aa)) are editing domain. The catalytic stretch occupies residues 199 to 498 (PHVKYIKEKE…TLENKPPALP (300 aa)). Zn(2+)-binding residues include cysteine 291, histidine 343, and histidine 467.

The protein belongs to the class-II aminoacyl-tRNA synthetase family. In terms of assembly, homodimer. Requires Zn(2+) as cofactor.

The protein localises to the cytoplasm. The enzyme catalyses tRNA(Thr) + L-threonine + ATP = L-threonyl-tRNA(Thr) + AMP + diphosphate + H(+). In terms of biological role, catalyzes the attachment of threonine to tRNA(Thr) in a two-step reaction: L-threonine is first activated by ATP to form Thr-AMP and then transferred to the acceptor end of tRNA(Thr). Also edits incorrectly charged L-seryl-tRNA(Thr). The sequence is that of Threonine--tRNA ligase from Methanococcus maripaludis (strain C7 / ATCC BAA-1331).